Here is an 89-residue protein sequence, read N- to C-terminus: Large ribosomal subunit protein bL27 (89 aa).

Positions 1 to 24 are disordered; it reads MAHKKGTGSTRNGRDSNAKRLGVK.

Belongs to the bacterial ribosomal protein bL27 family.

The protein is Large ribosomal subunit protein bL27 of Synechococcus sp. (strain JA-2-3B'a(2-13)) (Cyanobacteria bacterium Yellowstone B-Prime).